The following is a 433-amino-acid chain: Glutamyl-tRNA reductase (433 aa).

Residues 49–52, S114, 119–121, and Q125 each bind substrate; these read TCNR and EPQ. C50 (nucleophile) is an active-site residue. 201 to 206 is a binding site for NADP(+); sequence GAGETI.

Belongs to the glutamyl-tRNA reductase family. In terms of assembly, homodimer.

It catalyses the reaction (S)-4-amino-5-oxopentanoate + tRNA(Glu) + NADP(+) = L-glutamyl-tRNA(Glu) + NADPH + H(+). The protein operates within porphyrin-containing compound metabolism; protoporphyrin-IX biosynthesis; 5-aminolevulinate from L-glutamyl-tRNA(Glu): step 1/2. In terms of biological role, catalyzes the NADPH-dependent reduction of glutamyl-tRNA(Glu) to glutamate 1-semialdehyde (GSA). The sequence is that of Glutamyl-tRNA reductase from Histophilus somni (strain 129Pt) (Haemophilus somnus).